The primary structure comprises 279 residues: uncharacterized protein (279 aa).

The first 31 residues, Met-1–Ala-31, serve as a signal peptide directing secretion.

This is an uncharacterized protein from Corynebacterium glutamicum (strain ATCC 13032 / DSM 20300 / JCM 1318 / BCRC 11384 / CCUG 27702 / LMG 3730 / NBRC 12168 / NCIMB 10025 / NRRL B-2784 / 534).